Here is a 265-residue protein sequence, read N- to C-terminus: Mlc titration factor A (265 aa).

The Zn(2+) site is built by His111, His148, His152, and Glu211.

This sequence belongs to the MtfA family. In terms of assembly, interacts with Mlc. It depends on Zn(2+) as a cofactor.

The protein localises to the cytoplasm. Its function is as follows. Involved in the modulation of the activity of the glucose-phosphotransferase system (glucose-PTS). Interacts with the transcriptional repressor Mlc, preventing its interaction with DNA and leading to the modulation of expression of genes regulated by Mlc, including ptsG, which encodes the PTS system glucose-specific EIICB component. Functionally, shows zinc-dependent metallopeptidase activity. The chain is Mlc titration factor A from Escherichia coli O6:K15:H31 (strain 536 / UPEC).